Consider the following 286-residue polypeptide: Leukocyte cell-derived chemotaxin 1 (286 aa).

The helical transmembrane segment at 29–49 threads the bilayer; the sequence is LVAFIAGAALLLFGGVGAFYL. Positions 75 to 157 constitute a BRICHOS domain; sequence DSAEGTIVEV…FCADLPIYWH (83 aa). A disulfide bridge connects residues Cys102 and Cys149. Positions 166 to 169 are excised as a propeptide; the sequence is RKRR. The segment covering 166–176 has biased composition (basic residues); the sequence is RKRRSATRMRR. Positions 166-220 are disordered; the sequence is RKRRSATRMRRQTSAGVNRQPARRRNSTASARDERPTGPEYNPENPYHQNQGSEG. N-linked (GlcNAc...) asparagine glycosylation is present at Asn191. 4 disulfides stabilise this stretch: Cys234/Cys238, Cys235/Cys275, Cys245/Cys269, and Cys249/Cys265.

The protein belongs to the chondromodulin-1 family. After cleavage, the post-translationally modified ChM-I is secreted as a glycoprotein.

It localises to the secreted. The protein resides in the extracellular space. It is found in the extracellular matrix. The protein localises to the endomembrane system. Its function is as follows. Bifunctional growth regulator. May contribute to the rapid growth of cartilage and vascular invasion prior to the replacement of cartilage by bone during endochondral bone development. Plays a role as antiangiogenic factor in cardiac valves to suppress neovascularization. This is Leukocyte cell-derived chemotaxin 1 from Danio rerio (Zebrafish).